The following is a 955-amino-acid chain: UPF0182 protein PMT_0755 (955 aa).

Transmembrane regions (helical) follow at residues 25 to 45 (LLLS…WLWF), 58 to 78 (WLWQ…CQLW), 107 to 127 (LLGC…LAWL), 146 to 166 (IWAL…MLGN), 178 to 198 (CFCF…ALAI), 214 to 234 (FGLG…AQLI), 264 to 284 (CNFL…LLWL), 313 to 333 (SLAS…TWIQ), and 340 to 360 (LIAS…APFV).

This sequence belongs to the UPF0182 family.

The protein localises to the cell membrane. This chain is UPF0182 protein PMT_0755, found in Prochlorococcus marinus (strain MIT 9313).